Here is a 168-residue protein sequence, read N- to C-terminus: Acetone carboxylase gamma subunit (168 aa).

As to quaternary structure, heterohexamer of two alpha, two beta and two gamma subunits. Requires Fe cation as cofactor. The cofactor is Mg(2+). Zn(2+) is required as a cofactor.

It catalyses the reaction acetone + hydrogencarbonate + 2 ATP + 3 H2O = acetoacetate + 2 AMP + 4 phosphate + 4 H(+). In terms of biological role, catalyzes the carboxylation of acetone to form acetoacetate. Has a reduced activity on butanone, and no activity on 2-pentatone, 3-pentatone, 2-hexanone, chloroacetone, pyruvate, phosphoenolpyruvate, acetaldehyde, propionaldehyde and propylene oxide. In Xanthobacter autotrophicus (strain ATCC BAA-1158 / Py2), this protein is Acetone carboxylase gamma subunit.